Consider the following 370-residue polypeptide: Psilocybin cluster transcription regulator (370 aa).

Disordered stretches follow at residues 1–39 (MAPT…ADIS) and 102–221 (YQTG…RRRR). Polar residues predominate over residues 143–152 (IQHQDQQQSG). Residues 183-202 (TSTSTPSGGRRGGRSATMGS) show a composition bias toward low complexity. Basic and acidic residues predominate over residues 204 to 218 (EWSRQRKDNHKEVER). The basic motif stretch occupies residues 208-221 (QRKDNHKEVERRRR). The region spanning 208 to 258 (QRKDNHKEVERRRRGNINEGINELGRIVPSGSGEKAKGAILSRAVQYIHHL) is the bHLH domain. The helix-loop-helix motif stretch occupies residues 222–258 (GNINEGINELGRIVPSGSGEKAKGAILSRAVQYIHHL). The disordered stretch occupies residues 317 to 370 (VSTAGAGSGAAKDESAAGTKRRSTDGADAAGTNVEGGNNDNAEGERDGKRQRTE). The segment covering 359-370 (EGERDGKRQRTE) has biased composition (basic and acidic residues).

The protein localises to the nucleus. Functionally, transcription factor that may regulate the expression of the gene cluster that mediates the biosynthesis of psilocybin, a psychotropic tryptamine-derived natural product. The polypeptide is Psilocybin cluster transcription regulator (Psilocybe cyanescens).